A 419-amino-acid chain; its full sequence is Endothiapepsin (419 aa).

The N-terminal stretch at 1-20 is a signal peptide; it reads MSSPLKNALVTAMLAGGALS. Residues 21-89 constitute a propeptide, activation peptide; it reads SPTKQHVGIP…QNSTSGLAER (69 aa). Residues 106-417 form the Peptidase A1 domain; that stretch reads YITPVQIGTP…GATTPTLGFA (312 aa). Catalysis depends on residues Asp-124 and Ser-288. An intrachain disulfide couples Cys-344 to Cys-379.

It belongs to the peptidase A1 family.

It catalyses the reaction Hydrolysis of proteins with specificity similar to that of pepsin A, prefers hydrophobic residues at P1 and P1', but does not cleave 14-Ala-|-Leu-15 in the B chain of insulin or Z-Glu-Tyr. Clots milk.. This chain is Endothiapepsin (EAPA), found in Cryphonectria parasitica (Chestnut blight fungus).